Consider the following 69-residue polypeptide: Photosystem I reaction center subunit IV (69 aa).

This sequence belongs to the PsaE family.

The protein resides in the cellular thylakoid membrane. Functionally, stabilizes the interaction between PsaC and the PSI core, assists the docking of the ferredoxin to PSI and interacts with ferredoxin-NADP oxidoreductase. The sequence is that of Photosystem I reaction center subunit IV from Prochlorococcus marinus (strain MIT 9515).